Here is a 341-residue protein sequence, read N- to C-terminus: Cysteine-rich with EGF-like domain protein 2 (341 aa).

A signal peptide spans 1–24 (MLLSCSIFRLFCIILLLQLGSIYT). In terms of domain architecture, EGF-like spans 136–178 (DCNTCIGGADRPCHGNGKCDGDGTRAGNGKCSCDEGYDGEFCL). 3 disulfide bridges follow: Cys140–Cys154, Cys148–Cys166, and Cys168–Cys177. Asn190 is a glycosylation site (N-linked (GlcNAc...) asparagine). FU repeat units follow at residues 193–248 (FFLC…DQYC) and 254–308 (SFSC…NQHC). In terms of domain architecture, EGF-like 2; calcium-binding; truncated spans 291-317 (DIDECTEDPASCSDNQHCLNTDGSFSC).

The protein belongs to the CRELD family.

The protein resides in the secreted. It is found in the endoplasmic reticulum. Possible role in neuronal acetylcholine receptor transport. The polypeptide is Cysteine-rich with EGF-like domain protein 2 (creld2) (Danio rerio (Zebrafish)).